The following is a 154-amino-acid chain: Protein X (154 aa).

Positions 68–117 (PCALRFTSARCMETTVNAHQSLPKVLHKRTLGLPAMSTTDLEAYFKDCVF) are mitochondrial targeting sequence.

It belongs to the orthohepadnavirus protein X family. In terms of assembly, may form homodimer. May interact with host CEBPA, CFLAR, CREB1, DDB1, E4F1, HBXIP, HSPD1/HSP60, NFKBIA, POLR2E and SMAD4. Interacts with host SMC5-SMC6 complex and induces its degradation. Interacts with host TRPC4AP; leading to prevent ubiquitination of TRPC4AP. Interacts with host PLSCR1; this interaction promotes ubiquitination and degradation of HBx and impairs HBx-mediated cell proliferation. A fraction may be phosphorylated in insect cells and HepG2 cells, a human hepatoblastoma cell line. Phosphorylated in vitro by host protein kinase C or mitogen-activated protein kinase. N-acetylated in insect cells.

Its subcellular location is the host cytoplasm. The protein resides in the host nucleus. It is found in the host mitochondrion. Multifunctional protein that plays a role in silencing host antiviral defenses and promoting viral transcription. Does not seem to be essential for HBV infection. May be directly involved in development of cirrhosis and liver cancer (hepatocellular carcinoma). Most of cytosolic activities involve modulation of cytosolic calcium. The effect on apoptosis is controversial depending on the cell types in which the studies have been conducted. May induce apoptosis by localizing in mitochondria and causing loss of mitochondrial membrane potential. May also modulate apoptosis by binding host CFLAR, a key regulator of the death-inducing signaling complex (DISC). Promotes viral transcription by using the host E3 ubiquitin ligase DDB1 to target the SMC5-SMC6 complex to proteasomal degradation. This host complex would otherwise bind to viral episomal DNA, and prevents its transcription. Moderately stimulates transcription of many different viral and cellular transcription elements. Promoters and enhancers stimulated by HBx contain DNA binding sites for NF-kappa-B, AP-1, AP-2, c-EBP, ATF/CREB, or the calcium-activated factor NF-AT. The protein is Protein X of Homo sapiens (Human).